Here is a 115-residue protein sequence, read N- to C-terminus: Large ribosomal subunit protein bL20c (115 aa).

The protein belongs to the bacterial ribosomal protein bL20 family.

It localises to the plastid. The protein resides in the chloroplast. Functionally, binds directly to 23S ribosomal RNA and is necessary for the in vitro assembly process of the 50S ribosomal subunit. It is not involved in the protein synthesizing functions of that subunit. This chain is Large ribosomal subunit protein bL20c, found in Cycas taitungensis (Prince sago).